We begin with the raw amino-acid sequence, 125 residues long: Acidic phospholipase A2 5 (125 aa).

Residue S1 is a signal peptide. Positions 2 to 7 are excised as a propeptide; sequence NRPMPL. 8 disulfides stabilise this stretch: C18-C77, C33-C124, C35-C50, C37-C54, C49-C105, C56-C98, C66-C91, and C84-C96. F28 provides a ligand contact to N-acetyl-beta-D-glucosamine. D30 contacts Zn(2+). Ca(2+) contacts are provided by Y34 and G36. Residues H53 and K69 each coordinate N-acetyl-beta-D-glucosamine. Residue H53 is part of the active site. Residue E76 coordinates Zn(2+). D99 is a catalytic residue. A Zn(2+)-binding site is contributed by N117.

In terms of assembly, heterodimer formed between isoform 5 and isoform 6 in presence of zinc ion and monomer in absence of zinc ion. Requires Ca(2+) as cofactor. In terms of tissue distribution, expressed by the venom gland.

The protein localises to the secreted. It carries out the reaction a 1,2-diacyl-sn-glycero-3-phosphocholine + H2O = a 1-acyl-sn-glycero-3-phosphocholine + a fatty acid + H(+). Its function is as follows. PLA2 catalyzes the calcium-dependent hydrolysis of the 2-acyl groups in 3-sn-phosphoglycerides. This chain is Acidic phospholipase A2 5, found in Naja sagittifera (Andaman cobra).